A 139-amino-acid chain; its full sequence is HTH-type transcriptional repressor Mb2911 (139 aa).

Residues 6-138 (DAPLGYLLYR…FKRMLEKLGS (133 aa)) form the HTH marR-type domain.

Homodimer.

Its function is as follows. Represses expression of the HQNO methyltransferase htm gene by binding to its promoter region. The chain is HTH-type transcriptional repressor Mb2911 from Mycobacterium bovis (strain ATCC BAA-935 / AF2122/97).